The primary structure comprises 416 residues: Caspase-9 (416 aa).

In terms of domain architecture, CARD spans 1-92 (MDEADRRLLR…DMLASFLRTN (92 aa)). At Thr-125 the chain carries Phosphothreonine; by MAPK1. Tyr-153 carries the post-translational modification Phosphotyrosine; by ABL1. Active-site residues include His-237 and Cys-287. The tract at residues 294–320 (HGFEVASTSPEDESPGSNPEPDATPFQ) is disordered. Phosphoserine occurs at positions 302, 307, and 310. The propeptide occupies 316–330 (ATPFQEGLRTFDQLD). (Microbial infection) ADP-riboxanated arginine is present on Arg-355.

This sequence belongs to the peptidase C14A family. Heterotetramer that consists of two anti-parallel arranged heterodimers, each one formed by a 35 kDa (p35) and a 10 kDa (p10) subunit. Caspase-9 and APAF1 bind to each other via their respective NH2-terminal CED-3 homologous domains in the presence of cytochrome C and ATP. Interacts (inactive form) with EFHD2. Interacts with HAX1. Interacts with BIRC2/c-IAP1, XIAP/BIRC4, BIRC5/survivin, BIRC6/bruce and BIRC7/livin. Interacts with ABL1 (via SH3 domain); the interaction is direct and increases in the response of cells to genotoxic stress and ABL1/c-Abl activation. Interacts with BCL2L10. Interacts with NleF from pathogenic E.coli. In terms of processing, cleavages at Asp-315 by granzyme B and at Asp-330 by caspase-3 generate the two active subunits. Caspase-8 and -10 can also be involved in these processing events. Phosphorylated at Thr-125 by MAPK1/ERK2. Phosphorylation at Thr-125 is sufficient to block caspase-9 processing and subsequent caspase-3 activation. Phosphorylation on Tyr-153 by ABL1/c-Abl; occurs in the response of cells to DNA damage. Post-translationally, (Microbial infection) ADP-riboxanation by C.violaceum CopC blocks CASP9 processing, preventing CASP9 activation and ability to mediate intrinsic apoptosis. In terms of processing, ubiquitinated by BIRC6; this activity is inhibited by DIABLO/SMAC. As to expression, ubiquitous, with highest expression in the heart, moderate expression in liver, skeletal muscle, and pancreas. Low levels in all other tissues. Within the heart, specifically expressed in myocytes.

It catalyses the reaction Strict requirement for an Asp residue at position P1 and with a marked preference for His at position P2. It has a preferred cleavage sequence of Leu-Gly-His-Asp-|-Xaa.. Its activity is regulated as follows. Inhibited by the effector protein NleF that is produced by pathogenic E.coli; this inhibits apoptosis. Inhibited by BIRC6; following inhibition of BIRC6-caspase binding by DIABLO/SMAC, BIRC6 is subjected to caspase cleavage, leading to an increase in active caspases. In terms of biological role, involved in the activation cascade of caspases responsible for apoptosis execution. Binding of caspase-9 to Apaf-1 leads to activation of the protease which then cleaves and activates effector caspases caspase-3 (CASP3) or caspase-7 (CASP7). Promotes DNA damage-induced apoptosis in a ABL1/c-Abl-dependent manner. Proteolytically cleaves poly(ADP-ribose) polymerase (PARP). Cleaves BIRC6 following inhibition of BIRC6-caspase binding by DIABLO/SMAC. Lacks activity is an dominant-negative inhibitor of caspase-9. The polypeptide is Caspase-9 (CASP9) (Homo sapiens (Human)).